A 101-amino-acid polypeptide reads, in one-letter code: NAD(P)H-quinone oxidoreductase subunit 4L, chloroplastic (101 aa).

3 consecutive transmembrane segments (helical) span residues 2-22 (ILEH…YGLI), 32-52 (MCLE…SDFF), and 61-81 (IFCI…LAIV).

Belongs to the complex I subunit 4L family. NDH is composed of at least 16 different subunits, 5 of which are encoded in the nucleus.

It localises to the plastid. Its subcellular location is the chloroplast thylakoid membrane. The catalysed reaction is a plastoquinone + NADH + (n+1) H(+)(in) = a plastoquinol + NAD(+) + n H(+)(out). The enzyme catalyses a plastoquinone + NADPH + (n+1) H(+)(in) = a plastoquinol + NADP(+) + n H(+)(out). Functionally, NDH shuttles electrons from NAD(P)H:plastoquinone, via FMN and iron-sulfur (Fe-S) centers, to quinones in the photosynthetic chain and possibly in a chloroplast respiratory chain. The immediate electron acceptor for the enzyme in this species is believed to be plastoquinone. Couples the redox reaction to proton translocation, and thus conserves the redox energy in a proton gradient. This is NAD(P)H-quinone oxidoreductase subunit 4L, chloroplastic from Lepidium virginicum (Virginia pepperweed).